Here is a 180-residue protein sequence, read N- to C-terminus: Pro-glucagon (180 aa).

Residues 1 to 20 (MKSIYFVAGLFVMLVQGSWQ) form the signal peptide. Residues 26 to 56 (TEEKSRSFSAPQTEPLNDLDQMNEDKRHSQG) form a disordered region. S54 is modified (phosphoserine). The propeptide occupies 84-89 (NKNNIA). Residues S105 and S108 each carry the phosphoserine modification. Arginine amide is present on R127. A propeptide spanning residues 131 to 145 (DFPEEVAIVEEFRRR) is cleaved from the precursor. 2 positions are modified to phosphoserine: S150 and S152.

It belongs to the glucagon family. In terms of processing, proglucagon is post-translationally processed in a tissue-specific manner in pancreatic A cells and intestinal L cells. In pancreatic A cells, the major bioactive hormone is glucagon cleaved by PCSK2/PC2. In the intestinal L cells PCSK1/PC1 liberates GLP-1, GLP-2, glicentin and oxyntomodulin. GLP-1 is further N-terminally truncated by post-translational processing in the intestinal L cells resulting in GLP-1(7-37) GLP-1-(7-36)amide. The C-terminal amidation is neither important for the metabolism of GLP-1 nor for its effects on the endocrine pancreas. In terms of tissue distribution, glucagon is secreted in the A cells of the islets of Langerhans. GLP-1, GLP-2, oxyntomodulin and glicentin are secreted from enteroendocrine cells throughout the gastrointestinal tract. GLP-1 and GLP-2 are also secreted in selected neurons in the brain.

The protein localises to the secreted. Its function is as follows. Plays a key role in glucose metabolism and homeostasis. Regulates blood glucose by increasing gluconeogenesis and decreasing glycolysis. A counterregulatory hormone of insulin, raises plasma glucose levels in response to insulin-induced hypoglycemia. Plays an important role in initiating and maintaining hyperglycemic conditions in diabetes. Potent stimulator of glucose-dependent insulin release. Also stimulates insulin release in response to IL6. Plays important roles on gastric motility and the suppression of plasma glucagon levels. May be involved in the suppression of satiety and stimulation of glucose disposal in peripheral tissues, independent of the actions of insulin. Has growth-promoting activities on intestinal epithelium. May also regulate the hypothalamic pituitary axis (HPA) via effects on LH, TSH, CRH, oxytocin, and vasopressin secretion. Increases islet mass through stimulation of islet neogenesis and pancreatic beta cell proliferation. Inhibits beta cell apoptosis. Functionally, stimulates intestinal growth and up-regulates villus height in the small intestine, concomitant with increased crypt cell proliferation and decreased enterocyte apoptosis. The gastrointestinal tract, from the stomach to the colon is the principal target for GLP-2 action. Plays a key role in nutrient homeostasis, enhancing nutrient assimilation through enhanced gastrointestinal function, as well as increasing nutrient disposal. Stimulates intestinal glucose transport and decreases mucosal permeability. In terms of biological role, significantly reduces food intake. Inhibits gastric emptying in humans. Suppression of gastric emptying may lead to increased gastric distension, which may contribute to satiety by causing a sensation of fullness. Its function is as follows. May modulate gastric acid secretion and the gastro-pyloro-duodenal activity. May play an important role in intestinal mucosal growth in the early period of life. This Canis lupus familiaris (Dog) protein is Pro-glucagon (GCG).